Reading from the N-terminus, the 348-residue chain is Holliday junction branch migration complex subunit RuvB (348 aa).

A large ATPase domain (RuvB-L) region spans residues A4–Y184. ATP-binding positions include I23, R24, G65, K68, T69, T70, E131–F133, R174, Y184, and R221. Residue T69 participates in Mg(2+) binding. Residues S185 to D255 form a small ATPAse domain (RuvB-S) region. The head domain (RuvB-H) stretch occupies residues E258 to E348. R294, R313, and R318 together coordinate DNA.

The protein belongs to the RuvB family. In terms of assembly, homohexamer. Forms an RuvA(8)-RuvB(12)-Holliday junction (HJ) complex. HJ DNA is sandwiched between 2 RuvA tetramers; dsDNA enters through RuvA and exits via RuvB. An RuvB hexamer assembles on each DNA strand where it exits the tetramer. Each RuvB hexamer is contacted by two RuvA subunits (via domain III) on 2 adjacent RuvB subunits; this complex drives branch migration. In the full resolvosome a probable DNA-RuvA(4)-RuvB(12)-RuvC(2) complex forms which resolves the HJ.

It localises to the cytoplasm. The catalysed reaction is ATP + H2O = ADP + phosphate + H(+). Functionally, the RuvA-RuvB-RuvC complex processes Holliday junction (HJ) DNA during genetic recombination and DNA repair, while the RuvA-RuvB complex plays an important role in the rescue of blocked DNA replication forks via replication fork reversal (RFR). RuvA specifically binds to HJ cruciform DNA, conferring on it an open structure. The RuvB hexamer acts as an ATP-dependent pump, pulling dsDNA into and through the RuvAB complex. RuvB forms 2 homohexamers on either side of HJ DNA bound by 1 or 2 RuvA tetramers; 4 subunits per hexamer contact DNA at a time. Coordinated motions by a converter formed by DNA-disengaged RuvB subunits stimulates ATP hydrolysis and nucleotide exchange. Immobilization of the converter enables RuvB to convert the ATP-contained energy into a lever motion, pulling 2 nucleotides of DNA out of the RuvA tetramer per ATP hydrolyzed, thus driving DNA branch migration. The RuvB motors rotate together with the DNA substrate, which together with the progressing nucleotide cycle form the mechanistic basis for DNA recombination by continuous HJ branch migration. Branch migration allows RuvC to scan DNA until it finds its consensus sequence, where it cleaves and resolves cruciform DNA. The polypeptide is Holliday junction branch migration complex subunit RuvB (Pseudomonas putida (strain W619)).